The sequence spans 406 residues: MVSVTHCDSLWFGADIITMRGGNYQLIPQGAIAVTGDKIVWIGPHAELPPIHAARQVVYEGGLITPGLIDCHTHLVFGDDRSNEFEQRLNGVSYAEIAANGGGIISTVRATRQASEQQLLEQALFRLKPLLAEGVTTIEIKSGYGLNLESEIKMLRVARRLGELLPIDVKTTCLAAHALPPEFIGQPDDYIDVVCNSIIPQVAVENLADAVDAFCEHLAFSPAQVERVFLAAQKAGLPVKLHAEQLSALRGATLAAKFHAISADHLEYATESDVQAMANAGTVAVLLPGAYYLLRETQCPPIDLFRQYKVPMALASDANPGTSPVLSLRLMLNMACTLFRMTPEEALAGVTCHAAQALGVQQTQGTLETGKLANWVHWPLSHPAELAYWLGGQLPATVVFRGEVRP.

Positions 72 and 74 each coordinate Fe(3+). The Zn(2+) site is built by His-72 and His-74. 4-imidazolone-5-propanoate contacts are provided by Arg-81, Tyr-144, and His-177. Tyr-144 lines the N-formimidoyl-L-glutamate pocket. His-242 serves as a coordination point for Fe(3+). His-242 contacts Zn(2+). Gln-245 serves as a coordination point for 4-imidazolone-5-propanoate. Residue Asp-317 participates in Fe(3+) binding. Asp-317 is a binding site for Zn(2+). Asn-319 and Gly-321 together coordinate N-formimidoyl-L-glutamate. Thr-322 is a 4-imidazolone-5-propanoate binding site.

This sequence belongs to the metallo-dependent hydrolases superfamily. HutI family. Zn(2+) serves as cofactor. Fe(3+) is required as a cofactor.

It is found in the cytoplasm. The catalysed reaction is 4-imidazolone-5-propanoate + H2O = N-formimidoyl-L-glutamate. Its pathway is amino-acid degradation; L-histidine degradation into L-glutamate; N-formimidoyl-L-glutamate from L-histidine: step 3/3. Functionally, catalyzes the hydrolytic cleavage of the carbon-nitrogen bond in imidazolone-5-propanoate to yield N-formimidoyl-L-glutamate. It is the third step in the universal histidine degradation pathway. The protein is Imidazolonepropionase of Yersinia pestis bv. Antiqua (strain Antiqua).